A 772-amino-acid chain; its full sequence is Polyribonucleotide nucleotidyltransferase (772 aa).

Mg(2+) contacts are provided by Asp488 and Asp494. Positions 555–614 (PRLTTLKINPEKIRDVIGKGGAVIRGLQEETGTTINIDEDGTITIASTDPEKAEFAKKRI) constitute a KH domain. The S1 motif domain occupies 624–692 (GKVYEGPVTK…EKGRVKLSMK (69 aa)). The disordered stretch occupies residues 690–772 (SMKALTERPA…QPYAPRDSQE (83 aa)). A compositionally biased stretch (basic and acidic residues) spans 703-740 (YSERPPREDRGDRGDRGGERRERSDRGDRGGDRGERAP). Residues 743 to 757 (NSEQQQQPRSNEQQP) are compositionally biased toward low complexity.

This sequence belongs to the polyribonucleotide nucleotidyltransferase family. The cofactor is Mg(2+).

It localises to the cytoplasm. It catalyses the reaction RNA(n+1) + phosphate = RNA(n) + a ribonucleoside 5'-diphosphate. Involved in mRNA degradation. Catalyzes the phosphorolysis of single-stranded polyribonucleotides processively in the 3'- to 5'-direction. This Variovorax paradoxus (strain S110) protein is Polyribonucleotide nucleotidyltransferase.